The following is a 262-amino-acid chain: MSHGGGGHAAELFPEDQVLAIGAVLSIIGMYVAQFVPSLAMLIGGLLAAGACVAGANTTRRVAAYGLGTGVPSIGMVSLGMGTISALAGVLIPSAFGLPVLATPILAAVIAVVVGFIVGKLTQNPVGMKVPIIVSSMTKLSLMGALAILGFCTAFAGGFSADLIINGAINNGVIALAFIAAGMSILHPFNACIGPDESHKRTITLAVACGLMAWLIFSIAKLDIVSIVVAAIFWLYTYGSFVKMSLGDACEVKYVPELPKKE.

The next 6 membrane-spanning stretches (helical) occupy residues 35 to 57, 70 to 92, 97 to 119, 140 to 162, 172 to 194, and 214 to 236; these read FVPS…AGAN, GVPS…GVLI, GLPV…FIVG, LSLM…FSAD, GVIA…ACIG, and WLIF…FWLY.

Belongs to the MtrC family. The complex is composed of 8 subunits; MtrA, MtrB, MtrC, MtrD, MtrE, MtrF, MtrG and MtrH.

It localises to the cell membrane. The catalysed reaction is 5-methyl-5,6,7,8-tetrahydromethanopterin + coenzyme M + 2 Na(+)(in) = 5,6,7,8-tetrahydromethanopterin + methyl-coenzyme M + 2 Na(+)(out). Its pathway is one-carbon metabolism; methanogenesis from CO(2); methyl-coenzyme M from 5,10-methylene-5,6,7,8-tetrahydromethanopterin: step 2/2. Its function is as follows. Part of a complex that catalyzes the formation of methyl-coenzyme M and tetrahydromethanopterin from coenzyme M and methyl-tetrahydromethanopterin. This is an energy-conserving, sodium-ion translocating step. The protein is Tetrahydromethanopterin S-methyltransferase subunit C of Methanococcus maripaludis (strain DSM 14266 / JCM 13030 / NBRC 101832 / S2 / LL).